The sequence spans 581 residues: MKENAASRVLFILLLFLFASLLNGQSPPEKPKLIKCRSPGKETFTCWWEPGADGGLPTNYTLTYRKEGETLIHECPDYKTGGPNSCYFSKKYTSIWKMYVITVSAINQMGISSSDPLYVDVTYIVEPEPPVNLTLELKHPEDRKPYLWIKWSPPTLTDVKSGWFSIQYEIRLKPEKATDWETHFAPKLTQLKIFNLYPGQKYLVQIRCKPDHGYWSEWSPESFIQIPNDFPVKDTSMWIFVGVLSAVICLIMVWAVALKGYSMVTCILPPVPGPKIKGFDIHLLEKGKSEELLRALESQDFLPTSDCEDLLMEFIEVDDSEDQHLMPHPSKEHMEQGVKPMHLDPDTDSGRGSCDSPSLLSEKCDEPQAYPSKFHIPEGPEKLEDPETNHTCLQAPQSTSGEGKIPYFLANGPKSSTWPFPQPPSLYSPRYSYHNIADVCELALGMAGTTATLLDQTDQHAFKPSKTIETGGEGKAAKQSESEGYSSEPDQDMAWPLLQDKTPLFSAKPLEYVEIHKVSQDGVLALFPKQNEKVDAPETSKEYSKVSRVTDSNILVLIPDLQAQNLTLLEESAKKAPPALP.

An N-terminal signal peptide occupies residues 1-24 (MKENAASRVLFILLLFLFASLLNG). The Extracellular portion of the chain corresponds to 25-237 (QSPPEKPKLI…NDFPVKDTSM (213 aa)). Fibronectin type-III domains are found at residues 27–127 (PPEK…IVEP) and 129–229 (PPVN…IPND). C36 and C46 are oxidised to a cystine. The N-linked (GlcNAc...) asparagine glycan is linked to N59. Cysteines 75 and 86 form a disulfide. N132 carries an N-linked (GlcNAc...) asparagine glycan. Positions 211 and 212 each coordinate Zn(2+). Positions 215–219 (WSEWS) match the WSXWS motif motif. The chain crosses the membrane as a helical span at residues 238-258 (WIFVGVLSAVICLIMVWAVAL). Over 259–581 (KGYSMVTCIL…SAKKAPPALP (323 aa)) the chain is Cytoplasmic. The Box 1 motif motif lies at 267-275 (ILPPVPGPK). Composition is skewed to basic and acidic residues over residues 323 to 349 (QHLMPHPSKEHMEQGVKPMHLDPDTDS) and 375 to 388 (HIPEGPEKLEDPET). Disordered stretches follow at residues 323–388 (QHLM…DPET) and 462–492 (FKPSKTIETGGEGKAAKQSESEGYSSEPDQD).

Belongs to the type I cytokine receptor family. Type 1 subfamily. Interacts with SMARCA1. Interacts with NEK3 and VAV2 and this interaction is prolactin-dependent. As to expression, expressed in all tissues examined; liver, pituitary, adrenal gland, ovary and fetal liver.

Its subcellular location is the membrane. This is a receptor for the anterior pituitary hormone prolactin. This Ovis aries (Sheep) protein is Prolactin receptor (PRLR).